Consider the following 290-residue polypeptide: Barley B recombinant-like protein C (290 aa).

2 disordered regions span residues 60-90 and 102-183; these read PHHH…YGMM and QPEP…RKNI. The segment covering 104–116 has biased composition (pro residues); it reads EPQPQLQHPPSPP. The segment covering 138–158 has biased composition (basic residues); it reads PPKKRQQGRQPKVLRPKKPKK.

It belongs to the BBR/BPC family.

It is found in the nucleus. In terms of biological role, transcriptional regulator that specifically binds to GA-rich elements (GAGA-repeats) present in regulatory sequences of genes involved in developmental processes. The polypeptide is Barley B recombinant-like protein C (Oryza sativa subsp. japonica (Rice)).